A 125-amino-acid chain; its full sequence is Glycine cleavage system H protein (125 aa).

In terms of domain architecture, Lipoyl-binding spans 22 to 104 (SYVIGITDFA…YDTGWILKLE (83 aa)). K63 is subject to N6-lipoyllysine.

The protein belongs to the GcvH family. As to quaternary structure, the glycine cleavage system is composed of four proteins: P, T, L and H. (R)-lipoate serves as cofactor.

In terms of biological role, the glycine cleavage system catalyzes the degradation of glycine. The H protein shuttles the methylamine group of glycine from the P protein to the T protein. Is also involved in protein lipoylation via its role as an octanoyl/lipoyl carrier protein intermediate. The chain is Glycine cleavage system H protein from Listeria monocytogenes serotype 4b (strain CLIP80459).